The following is a 401-amino-acid chain: Bone morphogenetic protein 4 (401 aa).

The first 19 residues, 1 to 19 (MIPGNRMLMVILLSQVLLG), serve as a signal peptide directing secretion. The propeptide occupies 20–287 (GTNYASLIPD…GHALTRRSKR (268 aa)). Residues asparagine 141, asparagine 204, and asparagine 238 are each glycosylated (N-linked (GlcNAc...) asparagine). The tract at residues 279-299 (HALTRRSKRSPKQQRPRKKNK) is disordered. Residues 280 to 299 (ALTRRSKRSPKQQRPRKKNK) show a composition bias toward basic residues. Intrachain disulfides connect cysteine 301–cysteine 366, cysteine 330–cysteine 398, and cysteine 334–cysteine 400. Residues asparagine 343 and asparagine 358 are each glycosylated (N-linked (GlcNAc...) asparagine).

Belongs to the TGF-beta family. Homodimer; disulfide-linked. Forms heterodimers with the TGF-beta family member derriere. Part of a complex consisting of twsg1 and chrd. Interacts with tsku.

The protein resides in the secreted. Its subcellular location is the extracellular space. The protein localises to the extracellular matrix. In terms of biological role, posterior-ventralizing factor in Xenopus mesoderm induction. Induces posteroventral mesoderm and counteracts dorsalizing signals such as activin. The polypeptide is Bone morphogenetic protein 4 (bmp4) (Xenopus laevis (African clawed frog)).